The following is a 235-amino-acid chain: Large ribosomal subunit protein uL1 (235 aa).

The protein belongs to the universal ribosomal protein uL1 family. Part of the 50S ribosomal subunit.

Its function is as follows. Binds directly to 23S rRNA. The L1 stalk is quite mobile in the ribosome, and is involved in E site tRNA release. Functionally, protein L1 is also a translational repressor protein, it controls the translation of the L11 operon by binding to its mRNA. The sequence is that of Large ribosomal subunit protein uL1 from Prochlorococcus marinus subsp. pastoris (strain CCMP1986 / NIES-2087 / MED4).